A 201-amino-acid chain; its full sequence is Cell division protein SepF (201 aa).

Residues 27 to 38 are compositionally biased toward basic and acidic residues; it reads VQERTSVQRDSR. The segment at 27-99 is disordered; the sequence is VQERTSVQRD…PRVQNKDSVR (73 aa). Residues 43–54 show a composition bias toward polar residues; the sequence is QEASQRSHMTNS. The segment covering 72-81 has biased composition (basic and acidic residues); that stretch reads NRQERQRVQR. The span at 83-92 shows a compositional bias: polar residues; the sequence is NAYQQATPRV.

It belongs to the SepF family. As to quaternary structure, homodimer. Interacts with FtsZ.

The protein resides in the cytoplasm. Functionally, cell division protein that is part of the divisome complex and is recruited early to the Z-ring. Probably stimulates Z-ring formation, perhaps through the cross-linking of FtsZ protofilaments. Its function overlaps with FtsA. In Streptococcus agalactiae serotype V (strain ATCC BAA-611 / 2603 V/R), this protein is Cell division protein SepF.